A 182-amino-acid polypeptide reads, in one-letter code: Adenine phosphoribosyltransferase (182 aa).

Ala-133–Ser-137 contacts AMP.

It belongs to the purine/pyrimidine phosphoribosyltransferase family. As to quaternary structure, homodimer. The cofactor is Mg(2+).

The protein resides in the cytoplasm. It is found in the nucleus. The enzyme catalyses AMP + diphosphate = 5-phospho-alpha-D-ribose 1-diphosphate + adenine. It participates in purine metabolism; AMP biosynthesis via salvage pathway; AMP from adenine: step 1/1. In terms of biological role, catalyzes a salvage reaction resulting in the formation of AMP, that is energically less costly than de novo synthesis. This Yarrowia lipolytica (strain CLIB 122 / E 150) (Yeast) protein is Adenine phosphoribosyltransferase (APT1).